Consider the following 189-residue polypeptide: MKNVLLPNNQERKRSLSNSEIFTFDDKRLLIGQINSLFGVQGWVKIFSHTHPRENILFYQPWHINVDANWQTLEIIQGCVQAKTIVAQIKDVFDKEQARAYIGIDLYIKKSQLPQLKSGEYYWDDLIGLEVINKAKIILGKVSNLVDTGSNNVLVINGEREHWVPYISPFLIKVDIDNQIILVDWDENF.

The PRC barrel domain occupies 118 to 189; it reads SGEYYWDDLI…IILVDWDENF (72 aa).

This sequence belongs to the RimM family. Binds ribosomal protein uS19.

Its subcellular location is the cytoplasm. Functionally, an accessory protein needed during the final step in the assembly of 30S ribosomal subunit, possibly for assembly of the head region. Essential for efficient processing of 16S rRNA. May be needed both before and after RbfA during the maturation of 16S rRNA. It has affinity for free ribosomal 30S subunits but not for 70S ribosomes. The protein is Ribosome maturation factor RimM of Ruthia magnifica subsp. Calyptogena magnifica.